The following is a 443-amino-acid chain: Nitrate/nitrite binding protein NrtA (443 aa).

The N-terminal stretch at 1–25 (MSQFSRRKFLLTAGGTAAAALWLNA) is a signal peptide. C26 is lipidated: N-palmitoyl cysteine. C26 carries the S-diacylglycerol cysteine lipid modification. Over residues 31 to 46 (SSTDTTGSTSTPAPSG) the composition is skewed to low complexity. The disordered stretch occupies residues 31–52 (SSTDTTGSTSTPAPSGTSGGDA). The nitrate site is built by W96, Q150, H195, G239, and K268.

It belongs to the CmpA/NrtA family. As to quaternary structure, the complex is composed of two ATP-binding proteins (NrtC and NrtD), two transmembrane proteins (NrtB) and a solute-binding protein (NrtA). NrtA can form homotrimers. The N-terminus is blocked.

The protein resides in the cell inner membrane. Functionally, part of the ABC transporter complex NrtABCD involved in nitrate uptake. The complex is probably also involved in nitrite transport. NrtA is the substrate-binding protein. Binds both nitrate and nitrite with high affinity. The sequence is that of Nitrate/nitrite binding protein NrtA from Synechococcus elongatus (strain ATCC 33912 / PCC 7942 / FACHB-805) (Anacystis nidulans R2).